The primary structure comprises 175 residues: MGKLLSKIFGNKEMRILMLGLDAAGKTTILYKLKLGQSVTTIPTVGFNVETVTYKNVKFNVWDVGGQDKIRPLWRHYYTGTQGLIFVVDCADRDRIDEARTELHRIINDREMRDAIILIFANKQDLPDAMKPHEIQEKLGLTRIRDRNWYVQPSCATSGDGLSEGLIWLTSNHKL.

The N-myristoyl glycine moiety is linked to residue G2. GTP-binding positions include 20–27 (GLDAAGKT), 63–67 (DVGGQ), and 122–125 (NKQD).

The protein belongs to the small GTPase superfamily. Arf family. As to expression, expressed in the head (at protein level).

It is found in the golgi apparatus. Activation is generally mediated by a guanine exchange factor (GEF), while inactivation through hydrolysis of bound GTP is catalyzed by a GTPase activating protein (GAP). May be activated by Efa6. Functionally, GTP-binding protein involved in protein trafficking; may modulate vesicle budding and uncoating within the Golgi apparatus. Promotes cell movement and remodeling of the actin cytoskeleton during compound eye morphogenesis. Required for normal ethanol-induced tolerance and preference. Probably after Efa6-mediated activation, counteracts ethanol-induced sedation. The chain is ADP-ribosylation factor 6 from Drosophila melanogaster (Fruit fly).